The primary structure comprises 318 residues: Galactose-1-phosphate uridylyltransferase (318 aa).

Residues C32, C35, and H90 each contribute to the Zn(2+) site. A UDP-alpha-D-glucose-binding site is contributed by N130. H141 serves as a coordination point for Zn(2+). The active-site Tele-UMP-histidine intermediate is H143. Q145 lines the UDP-alpha-D-glucose pocket.

The protein belongs to the galactose-1-phosphate uridylyltransferase type 1 family. Requires Zn(2+) as cofactor.

It carries out the reaction alpha-D-galactose 1-phosphate + UDP-alpha-D-glucose = alpha-D-glucose 1-phosphate + UDP-alpha-D-galactose. It participates in carbohydrate metabolism; galactose metabolism. The sequence is that of Galactose-1-phosphate uridylyltransferase (galT) from Thermotoga maritima (strain ATCC 43589 / DSM 3109 / JCM 10099 / NBRC 100826 / MSB8).